The sequence spans 192 residues: Beta-glucosidase (192 aa).

It belongs to the glycosyl hydrolase 3 family.

It carries out the reaction Hydrolysis of terminal, non-reducing beta-D-glucosyl residues with release of beta-D-glucose.. It participates in glycan metabolism; cellulose degradation. The chain is Beta-glucosidase from Schizophyllum commune (Split gill fungus).